Consider the following 450-residue polypeptide: Chitobiosyldiphosphodolichol beta-mannosyltransferase (450 aa).

Over 1 to 13 the chain is Lumenal; that stretch reads MSWIQIPWSWVVT. A helical transmembrane segment spans residues 14 to 34; sequence LIVTYLSLPLIIYYLVPYIFY. Residues 35–106 are Cytoplasmic-facing; it reads GNKSSKKRII…PTLTLQGNKR (72 aa). An intramembrane region (helical) is located at residues 107-127; sequence SIIFLVKKVLFQVSAIIAQLW. At 128–450 the chain is on the cytoplasmic side; sequence ELRGSNYMLI…SAMQELKLVA (323 aa).

The protein belongs to the glycosyltransferase group 1 family.

It is found in the endoplasmic reticulum membrane. It carries out the reaction an N,N'-diacetylchitobiosyl-diphospho-di-trans,poly-cis-dolichol + GDP-alpha-D-mannose = a beta-D-Man-(1-&gt;4)-beta-D-GlcNAc-(1-&gt;4)-alpha-D-GlcNAc-diphospho-di-trans,poly-cis-dolichol + GDP + H(+). It participates in protein modification; protein glycosylation. Functionally, participates in the formation of the lipid-linked precursor oligosaccharide for N-glycosylation. Involved in assembling the dolichol-pyrophosphate-GlcNAc(2)-Man(5) intermediate on the cytoplasmic surface of the ER. The protein is Chitobiosyldiphosphodolichol beta-mannosyltransferase (ALG1) of Candida glabrata (strain ATCC 2001 / BCRC 20586 / JCM 3761 / NBRC 0622 / NRRL Y-65 / CBS 138) (Yeast).